Consider the following 90-residue polypeptide: Protein PRAC2 (90 aa).

In terms of tissue distribution, highly expressed in prostate and testis. Also detected in placenta, muscle, colon, peripheral blood leukocytes and skin.

The protein resides in the nucleus. This is Protein PRAC2 from Homo sapiens (Human).